The following is a 352-amino-acid chain: NADP-dependent oxidoreductase RED1 (352 aa).

NADP(+) is bound by residues 166-169, Lys192, Tyr208, Asn231, and 285-287; these read GAVG and FIV.

This sequence belongs to the NADP-dependent oxidoreductase L4BD family.

Its pathway is mycotoxin biosynthesis. NADP-dependent oxidoreductase; part of the Tox1B locus, one of the 2 loci that mediate the biosynthesis of T-toxin, a family of linear polyketides 37 to 45 carbons in length, of which the major component is 41 carbons, and which leads to high virulence to maize. One of the PKSs (PKS1 or PKS2) could synthesize a precursor, used subsequently by the other PKS as starter unit, to add additional carbons. Variability in the length of the final carbon backbone C35-47 could be achieved by varying the number of condensation cycles, or use of different starter or extender units or might be due to decarboxylation of the penultimate product, catalyzed by DEC1. Additional proteins are required for the biosynthesis of T-toxin, including oxidoreductases RED1, RED2, RED3, LAM1 and OXI1, as well as esterase TOX9. In Cochliobolus heterostrophus (strain C4 / ATCC 48331 / race T) (Southern corn leaf blight fungus), this protein is NADP-dependent oxidoreductase RED1.